A 49-amino-acid chain; its full sequence is Disintegrin ocellatin (49 aa).

Residues 1–47 enclose the Disintegrin domain; that stretch reads DCESGPCCDNCKFLKEGTICKMARGDNMHHYCNGKTCDCPRNPYKGE. Cystine bridges form between cysteine 2–cysteine 11, cysteine 7–cysteine 32, cysteine 8–cysteine 37, and cysteine 20–cysteine 39. Positions 24-26 match the Cell attachment site motif; the sequence is RGD.

It belongs to the venom metalloproteinase (M12B) family. P-II subfamily. P-IIa sub-subfamily. In terms of assembly, monomer. As to expression, expressed by the venom gland.

It is found in the secreted. Inhibits ADP-induced human platelet aggregation. In Echis ocellatus (Ocellated saw-scaled viper), this protein is Disintegrin ocellatin.